Consider the following 710-residue polypeptide: Adenylosuccinate synthetase (710 aa).

Disordered regions lie at residues 1–51 (MPVR…PVPQ) and 84–111 (DEPP…GRSK). Polar residues-rich tracts occupy residues 10-27 (YNNS…STTA) and 101-111 (ANASSSSGRSK). Residues 180–186 (GDEGKGK) and 210–212 (GHT) contribute to the GTP site. The Proton acceptor role is filled by D181. Mg(2+)-binding residues include D181 and G210. IMP-binding positions include 181-184 (DEGK), 208-211 (NAGH), T295, K309, Q421, T437, and K567. Residue H211 is the Proton donor of the active site. 563–569 (AVTKKPR) lines the substrate pocket. Residues R569 and 697–699 (GNG) contribute to the GTP site.

Belongs to the adenylosuccinate synthetase family. In terms of assembly, homodimer. Mg(2+) serves as cofactor.

Its subcellular location is the cytoplasm. It carries out the reaction IMP + L-aspartate + GTP = N(6)-(1,2-dicarboxyethyl)-AMP + GDP + phosphate + 2 H(+). Its pathway is purine metabolism; AMP biosynthesis via de novo pathway; AMP from IMP: step 1/2. Functionally, plays an important role in the salvage pathway for purine nucleotide biosynthesis. Catalyzes the first committed step in the biosynthesis of AMP from IMP. This Leishmania infantum protein is Adenylosuccinate synthetase.